Reading from the N-terminus, the 473-residue chain is C3a anaphylatoxin chemotactic receptor (473 aa).

Topologically, residues 1-23 (MESFTADTNSTDLHSRPLFKPQD) are extracellular. An N-linked (GlcNAc...) asparagine glycan is attached at N9. Residues 24–46 (IASMVILSLTCLLGLPGNGLVLW) form a helical membrane-spanning segment. At 47–57 (VAGVKMKRTVN) the chain is on the cytoplasmic side. Residues 58 to 80 (TVWFLHLTLADFLCCLSLPFSVA) form a helical membrane-spanning segment. The Extracellular portion of the chain corresponds to 81–96 (HLILRGHWPYGLFLCK). A disulfide bridge links C95 with C172. The chain crosses the membrane as a helical span at residues 97–118 (LIPSVIILNMFASVFLLTAISL). Topologically, residues 119–139 (DRCLMVHKPIWCQNHRSVRTA) are cytoplasmic. Residues 140–160 (FAVCGCVWVVTFVMCIPVFVY) traverse the membrane as a helical segment. The Extracellular portion of the chain corresponds to 161 to 329 (RDLLVVDDYS…TPQVAITISR (169 aa)). Sulfotyrosine is present on residues Y174 and Y184. N201 is a glycosylation site (N-linked (GlcNAc...) asparagine). Residues 233–252 (FHTSPEDPFSQDSASQQPHY) are disordered. At Y308 the chain carries Sulfotyrosine. A helical membrane pass occupies residues 330–349 (LVVGFLVPFFIMITCYSLIV). Topologically, residues 350-366 (FRMRKTNLTKSRNKTLR) are cytoplasmic. The chain crosses the membrane as a helical span at residues 367–389 (VAVAVVTVFFVCWIPYHIVGILL). Topologically, residues 390–406 (VITDQESALREVVLPWD) are extracellular. The chain crosses the membrane as a helical span at residues 407 to 427 (HMSIALASANSCFNPFLYALL). Residues 428-473 (GKDFRKKARQSVKGILEAAFSEELTHSTSCTQDKAPSKRNHMSTDV) are Cytoplasmic-facing. Residue S448 is modified to Phosphoserine. Phosphothreonine is present on T452.

It belongs to the G-protein coupled receptor 1 family. In terms of assembly, interacts with VGF-derived peptide TLQP-21.

The protein resides in the cell membrane. Receptor for the chemotactic and inflammatory peptide anaphylatoxin C3a. This receptor stimulates chemotaxis, granule enzyme release and superoxide anion production. The chain is C3a anaphylatoxin chemotactic receptor (C3ar1) from Rattus norvegicus (Rat).